The primary structure comprises 317 residues: Lipoyl synthase (317 aa).

[4Fe-4S] cluster contacts are provided by Cys56, Cys61, Cys67, Cys82, Cys86, Cys89, and Ser298. The Radical SAM core domain maps to 68-287; the sequence is WEDREATFLI…KEEAEQIGFS (220 aa).

This sequence belongs to the radical SAM superfamily. Lipoyl synthase family. It depends on [4Fe-4S] cluster as a cofactor.

It is found in the cytoplasm. The catalysed reaction is [[Fe-S] cluster scaffold protein carrying a second [4Fe-4S](2+) cluster] + N(6)-octanoyl-L-lysyl-[protein] + 2 oxidized [2Fe-2S]-[ferredoxin] + 2 S-adenosyl-L-methionine + 4 H(+) = [[Fe-S] cluster scaffold protein] + N(6)-[(R)-dihydrolipoyl]-L-lysyl-[protein] + 4 Fe(3+) + 2 hydrogen sulfide + 2 5'-deoxyadenosine + 2 L-methionine + 2 reduced [2Fe-2S]-[ferredoxin]. The protein operates within protein modification; protein lipoylation via endogenous pathway; protein N(6)-(lipoyl)lysine from octanoyl-[acyl-carrier-protein]: step 2/2. Functionally, catalyzes the radical-mediated insertion of two sulfur atoms into the C-6 and C-8 positions of the octanoyl moiety bound to the lipoyl domains of lipoate-dependent enzymes, thereby converting the octanoylated domains into lipoylated derivatives. The chain is Lipoyl synthase from Streptomyces coelicolor (strain ATCC BAA-471 / A3(2) / M145).